Consider the following 533-residue polypeptide: Cytochrome P450 monooxygenase calL (533 aa).

The chain crosses the membrane as a helical span at residues 8–28; the sequence is TQLALLVWGIAVCVTLAIVVP. Asn-33 is a glycosylation site (N-linked (GlcNAc...) asparagine). A disordered region spans residues 123-148; that stretch reads GKFKQDQSGRSKNPVPGHDVKPGQPR. The N-linked (GlcNAc...) asparagine glycan is linked to Asn-388. Heme is bound at residue Cys-467.

Belongs to the cytochrome P450 family. The cofactor is heme.

The protein localises to the membrane. The protein operates within secondary metabolite biosynthesis. Functionally, cytochrome P450 monooxygenase; part of the gene cluster that mediates the biosynthesis of calbistrin A and related compounds. Calbistrin A is a secondary metabolite with an interesting structure that was recently found to have bioactivity against leukemia cells. It consists of two polyketides linked by an ester bond: a bicyclic decalin containing polyketide and a linear 12 carbon dioic acid structure. The polyketide synthase calA is probably responsible for forming the decalin moiety. Because calA lacks a designated enoylreductase (ER) domain, the required activity is provided by the trans-enoyl reductase calK. Following release from the PKS, calF then probably catalyzes the oxidation and the subsequent Diels Alder cycloisomerization that lead to the formation of the decalin moiety. The decalin polyketide backbone includes two C-methyl groups, at C7 and C11 in backbone, of which the C7 position is probably methylated by the methyltransferase domain of calA. A candidate for adding the methyl group at C11, if not done by CalA, is the cluster methyltransferase calH. Several additional tailoring enzymes within the cluster could be involved in the modification of the decalin polyketide product. Those include the 3 cytochrome P450 monooxygenases CalE, CalG and CalL, of which one might be responsible for the introduction of the extra hydroxyl group attached to the backbone of the decalin moiety, at position C9 in the backbone, that allows for attachment of the linear moiety. One tailoring enzyme activity that is expected to be involved in biosynthesis of calbistrin is an acyltransferase for connecting the two polyketide synthase products, and which could be performed by the cluster acyltransferase calJ. The enzyme responsible for the biosynthesis of the linear moiety, probably a second PKS, has not been identified yet. This is Cytochrome P450 monooxygenase calL from Penicillium decumbens.